The following is a 282-amino-acid chain: Putative 1-acyl-sn-glycerol-3-phosphate acyltransferase acl-2 (282 aa).

Transmembrane regions (helical) follow at residues 4-24 (FWSI…NIST) and 32-52 (ISFY…TMIP). The HXXXXD motif motif lies at 98 to 103 (HQSSLD). The chain crosses the membrane as a helical span at residues 122–142 (ILAYVPFFNLGAYFSNTIFID).

The protein belongs to the 1-acyl-sn-glycerol-3-phosphate acyltransferase family.

Its subcellular location is the membrane. The catalysed reaction is a 1-acyl-sn-glycero-3-phosphate + an acyl-CoA = a 1,2-diacyl-sn-glycero-3-phosphate + CoA. It participates in phospholipid metabolism; CDP-diacylglycerol biosynthesis; CDP-diacylglycerol from sn-glycerol 3-phosphate: step 2/3. In terms of biological role, converts lysophosphatidic acid (LPA) into phosphatidic acid by incorporating an acyl moiety at the sn-2 position of the glycerol backbone. The polypeptide is Putative 1-acyl-sn-glycerol-3-phosphate acyltransferase acl-2 (acl-2) (Caenorhabditis elegans).